A 508-amino-acid chain; its full sequence is Glucose-1-phosphate adenylyltransferase small subunit 1, chloroplastic (508 aa).

Positions 1-27 (MSSIVTSGVINVPRSSSSSKNLSFSSS) are disordered. A chloroplast-targeting transit peptide spans 1–59 (MSSIVTSGVINVPRSSSSSKNLSFSSSSQLSGNKILTVSGNGAPRGRCTLKHVFLTPKA). Low complexity predominate over residues 15-27 (SSSSSKNLSFSSS).

The protein belongs to the bacterial/plant glucose-1-phosphate adenylyltransferase family. In terms of assembly, heterotetramer. In terms of tissue distribution, seeds.

It is found in the plastid. The protein resides in the chloroplast. It carries out the reaction alpha-D-glucose 1-phosphate + ATP + H(+) = ADP-alpha-D-glucose + diphosphate. Its pathway is glycan biosynthesis; starch biosynthesis. Activated by 3'phosphoglycerate, inhibited by orthophosphate. Allosteric regulation. In terms of biological role, this protein plays a role in synthesis of starch. It catalyzes the synthesis of the activated glycosyl donor, ADP-glucose from Glc-1-P and ATP. The protein is Glucose-1-phosphate adenylyltransferase small subunit 1, chloroplastic (AGPC) of Vicia faba (Broad bean).